Reading from the N-terminus, the 232-residue chain is Triggering receptor expressed on myeloid cells 1 (232 aa).

A signal peptide spans 1 to 20 (MRKAGVWGLLWMLFIEEIQA). The Ig-like V-type domain maps to 21 to 125 (AAEVFEEKCT…DPIILFHPVR (105 aa)). Residues 21–203 (AAEVFEEKCT…THVNRAPGIS (183 aa)) are Extracellular-facing. Cysteines 41 and 109 form a disulfide. Residues 152-186 (PLPVTTKLRPRPRPRPKPVTQPIPTSADRLSSPGF) are disordered. N-linked (GlcNAc...) asparagine glycosylation is present at asparagine 192. The chain crosses the membrane as a helical span at residues 204 to 224 (IIIPAACGLLSKTLVFIGLFA). At 225-232 (VTHRSFAS) the chain is on the cytoplasmic side.

As to quaternary structure, monomer. Homomultimer; when activated. Interacts with TYROBP/DAP12. Interacts with TLR4. As to expression, detected in bone marrow, tongue, lung, liver, thymus, spleen, jejunum, ileum and lymph nodes.

Its subcellular location is the cell membrane. Its function is as follows. Cell surface receptor that plays important roles in innate and adaptive immunity by amplifying inflammatory responses. Upon activation by various ligands such as PGLYRP1, HMGB1 or HSP70, multimerizes and forms a complex with transmembrane adapter TYROBP/DAP12. In turn, initiates a SYK-mediated cascade of tyrosine phosphorylation, activating multiple downstream mediators such as BTK, MAPK1, MAPK3 or phospholipase C-gamma. This cascade promotes the neutrophil- and macrophage-mediated release of pro-inflammatory cytokines and/or chemokines, as well as their migration and thereby amplifies inflammatory responses that are triggered by bacterial and fungal infections. By also promoting the amplification of inflammatory signals that are initially triggered by Toll-like receptor (TLR) and NOD-like receptor engagement, plays a major role in the pathophysiology of acute and chronic inflammatory diseases of different etiologies including septic shock and atherosclerosis. This chain is Triggering receptor expressed on myeloid cells 1 (TREM1), found in Bos taurus (Bovine).